Consider the following 311-residue polypeptide: MPKQHLVIATRQSALALWQAEHVKQRLEALHPGLTVELLGLTTKGDIILDTPLAKVGGKGLFVKELETAMLEGRADIAVHSMKDVPMEFPPGLGLGAILERETPMDAFVSNQYASLDELPEGAVVGTSSLRRQCQLSERRPDLKILSLRGNVNTRLAKLDAGDFDAIILAASGLKRLGFSGRIREELTPEVSLPAVGQGALGIECRLDDPEAMALIAQLQDAETTARVSAERAMNHRLQGGCQVPIAGYAEITGDQMRLRGLVGSPDGAQVLRDEVEGPVAAAEALGTELAERLLQQGAGKILEAVYGNHS.

Position 242 is an S-(dipyrrolylmethanemethyl)cysteine (cysteine 242).

It belongs to the HMBS family. In terms of assembly, monomer. Requires dipyrromethane as cofactor.

It carries out the reaction 4 porphobilinogen + H2O = hydroxymethylbilane + 4 NH4(+). It functions in the pathway porphyrin-containing compound metabolism; protoporphyrin-IX biosynthesis; coproporphyrinogen-III from 5-aminolevulinate: step 2/4. Functionally, tetrapolymerization of the monopyrrole PBG into the hydroxymethylbilane pre-uroporphyrinogen in several discrete steps. This Hahella chejuensis (strain KCTC 2396) protein is Porphobilinogen deaminase.